A 268-amino-acid polypeptide reads, in one-letter code: Stomatin homolog PYRAB06580 (268 aa).

The chain crosses the membrane as a helical span at residues 1 to 21 (MILPTNFFVTTIILLFILIFL). Coiled-coil stretches lie at residues 125–152 (GQAHLDELLSERDKLNMQLQRIIDEATD) and 178–213 (KQAEAERERRARITLAEAERQAAEKLREAAEIISEH).

The protein belongs to the band 7/mec-2 family. In terms of assembly, homotrimer.

It is found in the membrane. This chain is Stomatin homolog PYRAB06580, found in Pyrococcus abyssi (strain GE5 / Orsay).